A 546-amino-acid polypeptide reads, in one-letter code: Cytokine-like nuclear factor N-PAC (546 aa).

The 59-residue stretch at 8 to 66 (LGDLVWGKLGRYPPWPGKIVNPPKDLKKPRGKKCFFVKFFGTEDHAWIKVEQLKPYHAH) folds into the PWWP domain. 2 stretches are compositionally biased toward basic and acidic residues: residues 91–145 (RRAK…EGKK) and 161–181 (RAQE…KDLT). Residues 91–187 (RRAKGKDQTS…KDLTIPESST (97 aa)) are disordered. A Phosphoserine modification is found at serine 130. Lysine 135 is covalently cross-linked (Glycyl lysine isopeptide (Lys-Gly) (interchain with G-Cter in SUMO2)). Serine 166 is modified (phosphoserine). Residues 167 to 179 (PRKRGRPPKDEKD) constitute a DNA-binding region (a.T hook). Glycyl lysine isopeptide (Lys-Gly) (interchain with G-Cter in SUMO2) cross-links involve residues lysine 175, lysine 178, lysine 200, and lysine 210. An interaction with histone H3 region spans residues 213–216 (DPHF). The tract at residues 215–224 (HFHHFLLSQT) is interaction with KDM1B. Residues lysine 226, lysine 236, lysine 239, and lysine 268 each participate in a glycyl lysine isopeptide (Lys-Gly) (interchain with G-Cter in SUMO2) cross-link. The tract at residues 260–546 (GSITPTDKKI…MSAVYRAYIH (287 aa)) is dehydrogenase domain. 270–284 (GFLGLGLMGSGIVSN) contributes to the NAD(+) binding site. A Glycyl lysine isopeptide (Lys-Gly) (interchain with G-Cter in SUMO2) cross-link involves residue lysine 301. NAD(+) contacts are provided by threonine 355 and lysine 498. Serine 533 carries the phosphoserine modification.

The protein belongs to the HIBADH-related family. NP60 subfamily. In terms of assembly, homotetramere. Interacts with MAPK14. Interacts with KDM1B at nucleosomes; this interaction stimulates H3K4me1 and H3K4me2 demethylation. Binds to mononucleosomes. Interacts with GATA4; the interaction is required for a synergistic activation of GATA4 target genes transcription.

Its subcellular location is the nucleus. It localises to the chromosome. In terms of biological role, cytokine-like nuclear factor with chromatin gene reader activity involved in chromatin modification and regulation of gene expression. Acts as a nucleosome-destabilizing factor that is recruited to genes during transcriptional activation. Recognizes and binds histone H3 without a preference for specific epigenetic markers and also binds DNA. Interacts with KDM1B and promotes its histone demethylase activity by facilitating the capture of H3 tails, they form a multifunctional enzyme complex that modifies transcribed chromatin and facilitates Pol II transcription through nucleosomes. Stimulates the acetylation of 'Lys-56' of nucleosomal histone H3 (H3K56ac) by EP300. With GATA4, co-binds a defined set of heart development genes and coregulates their expression during cardiomyocyte differentiation. Regulates p38 MAP kinase activity by mediating stress activation of MAPK14/p38alpha and specifically regulating MAPK14 signaling. Indirectly promotes phosphorylation of MAPK14 and activation of ATF2. The phosphorylation of MAPK14 requires upstream activity of MAP2K4 and MAP2K6. This is Cytokine-like nuclear factor N-PAC from Mus musculus (Mouse).